Reading from the N-terminus, the 297-residue chain is Cytidine deaminase (297 aa).

2 consecutive CMP/dCMP-type deaminase domains span residues 50–170 (SDKE…FGPK) and 189–297 (ETES…YASL). 91–93 (NME) is a substrate binding site. H104 contacts Zn(2+). The Proton donor role is filled by E106. 2 residues coordinate Zn(2+): C131 and C134.

This sequence belongs to the cytidine and deoxycytidylate deaminase family. In terms of assembly, homodimer. The cofactor is Zn(2+).

It carries out the reaction cytidine + H2O + H(+) = uridine + NH4(+). The enzyme catalyses 2'-deoxycytidine + H2O + H(+) = 2'-deoxyuridine + NH4(+). This enzyme scavenges exogenous and endogenous cytidine and 2'-deoxycytidine for UMP synthesis. The polypeptide is Cytidine deaminase (Aliivibrio fischeri (strain ATCC 700601 / ES114) (Vibrio fischeri)).